A 193-amino-acid chain; its full sequence is Orotate phosphoribosyltransferase (193 aa).

116 to 124 (EDVVTTGKS) is a binding site for 5-phospho-alpha-D-ribose 1-diphosphate. 2 residues coordinate orotate: T120 and R148.

It belongs to the purine/pyrimidine phosphoribosyltransferase family. PyrE subfamily. Homodimer. The cofactor is Mg(2+).

It carries out the reaction orotidine 5'-phosphate + diphosphate = orotate + 5-phospho-alpha-D-ribose 1-diphosphate. It participates in pyrimidine metabolism; UMP biosynthesis via de novo pathway; UMP from orotate: step 1/2. Catalyzes the transfer of a ribosyl phosphate group from 5-phosphoribose 1-diphosphate to orotate, leading to the formation of orotidine monophosphate (OMP). The sequence is that of Orotate phosphoribosyltransferase from Clostridium tetani (strain Massachusetts / E88).